The chain runs to 118 residues: Co-chaperonin GroES (118 aa).

Belongs to the GroES chaperonin family. In terms of assembly, heptamer of 7 subunits arranged in a ring. Interacts with the chaperonin GroEL.

The protein localises to the cytoplasm. Its function is as follows. Together with the chaperonin GroEL, plays an essential role in assisting protein folding. The GroEL-GroES system forms a nano-cage that allows encapsulation of the non-native substrate proteins and provides a physical environment optimized to promote and accelerate protein folding. GroES binds to the apical surface of the GroEL ring, thereby capping the opening of the GroEL channel. The protein is Co-chaperonin GroES of Helicobacter acinonychis (strain Sheeba).